The sequence spans 296 residues: Fructose-bisphosphate aldolase class 1 (296 aa).

Glutamate 175 serves as the catalytic Proton acceptor. Lysine 212 serves as the catalytic Schiff-base intermediate with dihydroxyacetone-P.

Belongs to the class I fructose-bisphosphate aldolase family.

It carries out the reaction beta-D-fructose 1,6-bisphosphate = D-glyceraldehyde 3-phosphate + dihydroxyacetone phosphate. The protein operates within carbohydrate degradation; glycolysis; D-glyceraldehyde 3-phosphate and glycerone phosphate from D-glucose: step 4/4. This is Fructose-bisphosphate aldolase class 1 from Staphylococcus epidermidis (strain ATCC 35984 / DSM 28319 / BCRC 17069 / CCUG 31568 / BM 3577 / RP62A).